The primary structure comprises 381 residues: Neuropeptide Y receptor type 2 (381 aa).

The tract at residues 1-37 (MGPVGAEADENQTVEVKVEPYGPGHTTPRGELPPDPE) is disordered. Over 1-51 (MGPVGAEADENQTVEVKVEPYGPGHTTPRGELPPDPEPELIDSTKLVEVQV) the chain is Extracellular. Residue N11 is glycosylated (N-linked (GlcNAc...) asparagine). A helical transmembrane segment spans residues 52-72 (ILILAYCSIILLGVVGNSLVI). The Cytoplasmic portion of the chain corresponds to 73 to 86 (HVVIKFKSMRTVTN). The helical transmembrane segment at 87 to 107 (FFIANLAVADLLVNTLCLPFT) threads the bilayer. Residues 108 to 124 (LTYTLMGEWKMGPVLCH) are Extracellular-facing. A disulfide bridge connects residues C123 and C203. A helical membrane pass occupies residues 125–145 (LVPYAQGLAVQVSTITLTVIA). The Cytoplasmic segment spans residues 146 to 165 (LDRHRCIVYHLESKISKRIS). A helical membrane pass occupies residues 166–186 (FLIIGLAWGISALLASPLAIF). Over 187–216 (REYSLIEIIPDFEIVACTEKWPGEEKSVYG) the chain is Extracellular. Residues 217-237 (TVYSLSTLLILYVLPLGIISF) traverse the membrane as a helical segment. At 238-268 (SYTRIWSKLRNHVSPGAASDHYHQRRHKMTK) the chain is on the cytoplasmic side. Residues 269 to 289 (MLVCVVVVFAVSWLPLHAFQL) traverse the membrane as a helical segment. The Extracellular portion of the chain corresponds to 290–304 (AVDIDSHVLDLKEYK). Residues 305-325 (LIFTVFHIIAMCSTFANPLLY) form a helical membrane-spanning segment. Residues 326–381 (GWMNSNYRKAFLSAFRCEQRLDAIHSEVSMTFKAKKNLEVKKNNGPTDSFSEATNV) are Cytoplasmic-facing. A lipid anchor (S-palmitoyl cysteine) is attached at C342.

The protein belongs to the G-protein coupled receptor 1 family.

Its subcellular location is the cell membrane. Receptor for neuropeptide Y and peptide YY. The protein is Neuropeptide Y receptor type 2 (Npy2r) of Mus musculus (Mouse).